The following is a 646-amino-acid chain: Lamin-1 (646 aa).

The tract at residues 1 to 85 is head; it reads MAEKAGEAGV…GSRATSPTSF (85 aa). Positions 1 to 94 are disordered; that stretch reads MAEKAGEAGV…FSRAQEKEEL (94 aa). Composition is skewed to polar residues over residues 48 to 67 and 75 to 87; these read ATPS…SMSL and QGSR…SFSR. Residues 86 to 126 form a coil 1A region; sequence SRAQEKEELQNLNDRLAKILNKLNDSEEENRTLKIRLTTVQ. In terms of domain architecture, IF rod spans 90–446; the sequence is EKEELQNLND…KLLSDEEIRL (357 aa). The segment at 127-137 is linker 1; the sequence is QETSADLNDQI. Residues 138 to 281 are coil 1B; it reads GKYRDELERA…SKLQRQSLSV (144 aa). Residues 281-301 show a composition bias toward polar residues; that stretch reads VTTVDHHSAQSTSRRSGSDFS. The disordered stretch occupies residues 281 to 304; sequence VTTVDHHSAQSTSRRSGSDFSASV. Positions 282-299 are linker 2; sequence TTVDHHSAQSTSRRSGSD. The segment at 300–439 is coil 2; the sequence is FSASVEDMRS…TELEMYNKLL (140 aa). The interval 440 to 646 is tail; that stretch reads SDEEIRLGIT…GKGILGFFGL (207 aa). Positions 457–471 match the Nuclear localization signal motif; sequence VRHGAKKRKLTETFY. The segment covering 476-487 has biased composition (low complexity); the sequence is GSRSSAGSRSAG. The disordered stretch occupies residues 476-513; that stretch reads GSRSSAGSRSAGHNSTPVTKSQVTRTTVKTSENKSKAS. Polar residues predominate over residues 488 to 505; the sequence is HNSTPVTKSQVTRTTVKT. Residues 504-618 enclose the LTD domain; it reads KTSENKSKAS…NQMATYEVSA (115 aa).

It belongs to the intermediate filament family.

It is found in the nucleus. Functionally, intermediate filament (IF) protein, component of the nuclear lamina, a fibrous layer on the nucleoplasmic side of the inner nuclear membrane, which is thought to provide a framework for the nuclear envelope. The polypeptide is Lamin-1 (Hypsibius exemplaris (Freshwater tardigrade)).